The chain runs to 310 residues: Putative F-box protein PP2-B2 (310 aa).

Positions 1–34 (MIQSTMGHKQSVDSRGKGRKVPGSSSMVQKHRVE) are disordered. The region spanning 44 to 90 (PSLFDNLPEDCISNIISFTSPRDACVAASVSKTFESAVNSDSVWDKF) is the F-box domain.

The polypeptide is Putative F-box protein PP2-B2 (PP2B2) (Arabidopsis thaliana (Mouse-ear cress)).